Reading from the N-terminus, the 262-residue chain is Proteasome subunit alpha (262 aa).

The tract at residues 235 to 262 (LLPTTGESDAGDSGADGSPSGDSPDTSA) is disordered.

Belongs to the peptidase T1A family. As to quaternary structure, the 20S proteasome core is composed of 14 alpha and 14 beta subunits that assemble into four stacked heptameric rings, resulting in a barrel-shaped structure. The two inner rings, each composed of seven catalytic beta subunits, are sandwiched by two outer rings, each composed of seven alpha subunits. The catalytic chamber with the active sites is on the inside of the barrel. Has a gated structure, the ends of the cylinder being occluded by the N-termini of the alpha-subunits. Is capped by the proteasome-associated ATPase, ARC.

It is found in the cytoplasm. The protein operates within protein degradation; proteasomal Pup-dependent pathway. With respect to regulation, the formation of the proteasomal ATPase ARC-20S proteasome complex, likely via the docking of the C-termini of ARC into the intersubunit pockets in the alpha-rings, may trigger opening of the gate for substrate entry. Interconversion between the open-gate and close-gate conformations leads to a dynamic regulation of the 20S proteasome proteolysis activity. Functionally, component of the proteasome core, a large protease complex with broad specificity involved in protein degradation. The sequence is that of Proteasome subunit alpha from Gordonia bronchialis (strain ATCC 25592 / DSM 43247 / BCRC 13721 / JCM 3198 / KCTC 3076 / NBRC 16047 / NCTC 10667) (Rhodococcus bronchialis).